The chain runs to 515 residues: Protein disulfide-isomerase (515 aa).

A signal peptide spans 1–20 (MRSFAPWLVSLLGASAVVAA). Thioredoxin domains follow at residues 21-132 (ADTE…QSLP) and 339-470 (VLDG…ENGK). Residues Cys54, Cys57, Cys389, and Cys392 each act as nucleophile in the active site. 2 disulfides stabilise this stretch: Cys54/Cys57 and Cys389/Cys392. The interval 478-515 (VASEETQEGGDVTEAAPSATEAETPAATDDEKAEHDEL) is disordered. Positions 490–504 (TEAAPSATEAETPAA) are enriched in low complexity. The segment covering 506-515 (DDEKAEHDEL) has biased composition (basic and acidic residues). The Prevents secretion from ER signature appears at 512-515 (HDEL).

It belongs to the protein disulfide isomerase family.

The protein localises to the endoplasmic reticulum lumen. It catalyses the reaction Catalyzes the rearrangement of -S-S- bonds in proteins.. In terms of biological role, participates in the folding of proteins containing disulfide bonds, may be involved in glycosylation, prolyl hydroxylation and triglyceride transfer. This chain is Protein disulfide-isomerase (pdiA), found in Aspergillus niger.